The primary structure comprises 78 residues: UPF0270 protein IL0325 (78 aa).

This sequence belongs to the UPF0270 family.

The chain is UPF0270 protein IL0325 from Idiomarina loihiensis (strain ATCC BAA-735 / DSM 15497 / L2-TR).